Consider the following 356-residue polypeptide: Tyrosine recombinase XerS (356 aa).

In terms of domain architecture, Core-binding (CB) spans Leu16–Thr121. The region spanning Lys169–Asp354 is the Tyr recombinase domain. Residues Arg210, Lys234, His306, Arg309, and His332 contribute to the active site. The O-(3'-phospho-DNA)-tyrosine intermediate role is filled by Tyr341.

It belongs to the 'phage' integrase family. XerS subfamily.

It localises to the cytoplasm. With respect to regulation, ftsK is required for recombination. Site-specific tyrosine recombinase, which acts by catalyzing the cutting and rejoining of the recombining DNA molecules. Essential to convert dimers of the bacterial chromosome into monomers to permit their segregation at cell division. This chain is Tyrosine recombinase XerS, found in Streptococcus thermophilus (strain ATCC BAA-250 / LMG 18311).